A 361-amino-acid chain; its full sequence is Large ribosomal subunit protein mL45 (361 aa).

This sequence belongs to the mitochondrion-specific ribosomal protein mL45 family.

The protein localises to the mitochondrion. The chain is Large ribosomal subunit protein mL45 (mrpl-45) from Caenorhabditis briggsae.